The sequence spans 333 residues: 6-phosphogluconolactonase (333 aa).

The protein belongs to the cycloisomerase 2 family.

The enzyme catalyses 6-phospho-D-glucono-1,5-lactone + H2O = 6-phospho-D-gluconate + H(+). It functions in the pathway carbohydrate degradation; pentose phosphate pathway; D-ribulose 5-phosphate from D-glucose 6-phosphate (oxidative stage): step 2/3. Its function is as follows. Catalyzes the hydrolysis of 6-phosphogluconolactone to 6-phosphogluconate. In Yersinia enterocolitica serotype O:8 / biotype 1B (strain NCTC 13174 / 8081), this protein is 6-phosphogluconolactonase.